A 173-amino-acid chain; its full sequence is Alpha-crystallin A chain (173 aa).

Met1 is modified (N-acetylmethionine). Residues 1–63 (MDVTIQHPWF…RTVLDSGISE (63 aa)) form a required for complex formation with BFSP1 and BFSP2 region. The residue at position 6 (Gln6) is a Deamidated glutamine; partial. Ser45 carries the post-translational modification Phosphoserine. Gln50 carries the post-translational modification Deamidated glutamine; partial. One can recognise a sHSP domain in the interval 52–162 (LFRTVLDSGI…GHSERAIPVS (111 aa)). An N6-acetyllysine modification is found at Lys70. Position 90 is a deamidated glutamine; partial (Gln90). Lys99 is modified (N6-acetyllysine). His100 lines the Zn(2+) pocket. Asn101 is modified (deamidated asparagine; partial). The Zn(2+) site is built by Glu102 and His107. Ser122 carries the phosphoserine modification. Position 123 is a deamidated asparagine; partial (Asn123). The disordered stretch occupies residues 145–173 (KVQSGLDAGHSERAIPVSREEKPSSAPSS). Gln147 bears the Deamidated glutamine; partial mark. Over residues 153-167 (GHSERAIPVSREEKP) the composition is skewed to basic and acidic residues. Position 154 (His154) interacts with Zn(2+). O-linked (GlcNAc) serine glycosylation occurs at Ser162.

It belongs to the small heat shock protein (HSP20) family. In terms of assembly, heteromer composed of three CRYAA and one CRYAB subunits. Inter-subunit bridging via zinc ions enhances stability, which is crucial as there is no protein turn over in the lens. Can also form homodimers and homotetramers (dimers of dimers) which serve as the building blocks of homooligomers. Within homooligomers, the zinc-binding motif is created from residues of 3 different molecules. His-100 and Glu-102 from one molecule are ligands of the zinc ion, and His-107 and His-154 residues from additional molecules complete the site with tetrahedral coordination geometry. Part of a complex required for lens intermediate filament formation composed of BFSP1, BFSP2 and CRYAA. Post-translationally, acetylation at Lys-70 may increase chaperone activity. In terms of processing, undergoes age-dependent proteolytical cleavage at the C-terminus.

It is found in the cytoplasm. Its subcellular location is the nucleus. In terms of biological role, contributes to the transparency and refractive index of the lens. Acts as a chaperone, preventing aggregation of various proteins under a wide range of stress conditions. Required for the correct formation of lens intermediate filaments as part of a complex composed of BFSP1, BFSP2 and CRYAA. This chain is Alpha-crystallin A chain (CRYAA), found in Cavia porcellus (Guinea pig).